A 272-amino-acid chain; its full sequence is 3-methyl-2-oxobutanoate hydroxymethyltransferase (272 aa).

Positions 52 and 91 each coordinate Mg(2+). 3-methyl-2-oxobutanoate-binding positions include 52–53 (DS), D91, and K121. E123 contacts Mg(2+). Residue E190 is the Proton acceptor of the active site.

It belongs to the PanB family. Homodecamer; pentamer of dimers. The cofactor is Mg(2+).

It localises to the cytoplasm. The catalysed reaction is 3-methyl-2-oxobutanoate + (6R)-5,10-methylene-5,6,7,8-tetrahydrofolate + H2O = 2-dehydropantoate + (6S)-5,6,7,8-tetrahydrofolate. It participates in cofactor biosynthesis; (R)-pantothenate biosynthesis; (R)-pantoate from 3-methyl-2-oxobutanoate: step 1/2. In terms of biological role, catalyzes the reversible reaction in which hydroxymethyl group from 5,10-methylenetetrahydrofolate is transferred onto alpha-ketoisovalerate to form ketopantoate. This chain is 3-methyl-2-oxobutanoate hydroxymethyltransferase, found in Flavobacterium johnsoniae (strain ATCC 17061 / DSM 2064 / JCM 8514 / BCRC 14874 / CCUG 350202 / NBRC 14942 / NCIMB 11054 / UW101) (Cytophaga johnsonae).